Here is a 338-residue protein sequence, read N- to C-terminus: Glycerol-3-phosphate dehydrogenase [NAD(P)+] (338 aa).

NADPH contacts are provided by serine 13, tryptophan 14, and lysine 108. Positions 108, 139, and 141 each coordinate sn-glycerol 3-phosphate. An NADPH-binding site is contributed by alanine 143. Positions 194, 247, 257, 258, and 259 each coordinate sn-glycerol 3-phosphate. The active-site Proton acceptor is lysine 194. Residue arginine 258 coordinates NADPH. NADPH-binding residues include valine 282 and glutamate 284.

The protein belongs to the NAD-dependent glycerol-3-phosphate dehydrogenase family.

The protein localises to the cytoplasm. It catalyses the reaction sn-glycerol 3-phosphate + NAD(+) = dihydroxyacetone phosphate + NADH + H(+). The catalysed reaction is sn-glycerol 3-phosphate + NADP(+) = dihydroxyacetone phosphate + NADPH + H(+). It functions in the pathway membrane lipid metabolism; glycerophospholipid metabolism. Its function is as follows. Catalyzes the reduction of the glycolytic intermediate dihydroxyacetone phosphate (DHAP) to sn-glycerol 3-phosphate (G3P), the key precursor for phospholipid synthesis. The protein is Glycerol-3-phosphate dehydrogenase [NAD(P)+] of Streptococcus pneumoniae (strain Hungary19A-6).